The sequence spans 211 residues: RILP-like protein 2 (211 aa).

Positions 1 to 32 (MEEPPVREEEEEEGEEDEERDEVGPEGALGKS) are disordered. Acidic residues predominate over residues 8–21 (EEEEEEGEEDEERD). Residues 24–106 (GPEGALGKSP…RKEVEGLRRQ (83 aa)) enclose the RH1 domain. The stretch at 70-164 (RVLEMLEALV…VQEELQCYKS (95 aa)) forms a coiled coil. The residue at position 107 (Ser-107) is a Phosphoserine. The region spanning 130–201 (RPRFTLQELR…NKEEKTIIKK (72 aa)) is the RH2 domain. The interval 166-190 (LIPPREGPGGRREKDAVVTSAKNAG) is disordered.

This sequence belongs to the RILPL family. In terms of assembly, homodimer. Interacts with RAC1. Interacts (via N-terminus) with MYO5A, the interaction is required for its role in dendrite formation. Interacts with RAB8A; interaction is dependent on the phosphorylation of RAB8A on 'Thr-72'. Interacts with RAB10 and RAB12; interaction is dependent on the phosphorylation of 'Thr-73' on RAB10 and 'Ser-105' on RAB12. As to expression, widely expressed. Expressed at higher level in lung.

The protein resides in the cytoplasm. It is found in the cytosol. Its subcellular location is the cytoskeleton. The protein localises to the microtubule organizing center. It localises to the centrosome. The protein resides in the cell projection. It is found in the cilium. Involved in cell shape and neuronal morphogenesis, positively regulating the establishment and maintenance of dendritic spines. Plays a role in cellular protein transport, including protein transport away from primary cilia. May function via activation of RAC1 and PAK1. The chain is RILP-like protein 2 (RILPL2) from Homo sapiens (Human).